The chain runs to 357 residues: Probable butyrate kinase 1 (357 aa).

It belongs to the acetokinase family.

It is found in the cytoplasm. The enzyme catalyses butanoate + ATP = butanoyl phosphate + ADP. This Caldanaerobacter subterraneus subsp. tengcongensis (strain DSM 15242 / JCM 11007 / NBRC 100824 / MB4) (Thermoanaerobacter tengcongensis) protein is Probable butyrate kinase 1.